Reading from the N-terminus, the 772-residue chain is Serine/threonine-protein kinase tousled-like 2 (772 aa).

Residues 24 to 126 (GVSKGPLNSE…SNPLPRRVEQ (103 aa)) form a disordered region. Polar residues predominate over residues 29-44 (PLNSESSNQSLCSVGS). The span at 46 to 61 (SDKEVETPEKKQNDQR) shows a compositional bias: basic and acidic residues. A phosphoserine mark is found at S73, S94, S99, S115, S117, and S134. The interval 180–208 (QNSPSSTGSGNTEHSCSSQKQISIQHRQT) is disordered. Positions 225-276 (NSDLEKKEGRIDDLLRANCDLRRQIDEQQKMLEKYKERLNRCVTMSKKLLIE) are required for interaction with TLK1 and DYNLL1/LC8. Coiled coils occupy residues 225–276 (NSDL…LLIE) and 317–347 (AFQNLIKQQERINSQREEIERQRKMLAKRKP). Positions 342–385 (LAKRKPPAMGQAPPATNEQKQRKSKTNGAENETPSSGNTELKDT) are disordered. The segment covering 367 to 380 (TNGAENETPSSGNT) has biased composition (polar residues). The stretch at 403-451 (HEQEEIFKLRLGHLKKEEAEIQAELERLERVRNLHIRELKRIHNEDNSQ) forms a coiled coil. The 280-residue stretch at 462–741 (YLLLHLLGRG…VQQLACDPYL (280 aa)) folds into the Protein kinase domain. Residues 468–476 (LGRGGFSEV) and K491 contribute to the ATP site. D592 functions as the Proton acceptor in the catalytic mechanism. The residue at position 750 (S750) is a Phosphoserine; by CHEK1.

The protein belongs to the protein kinase superfamily. Ser/Thr protein kinase family. In terms of assembly, monomer. May form homodimers; homodimerization may enhance autophosphoylation and enzymatic activity. Heterodimer with TLK1. Interacts with YWHAZ; association with 14-3-3 proteins such as YWHAZ regulates subcellular location. May also interact with FEZ1/LZTS1 and FEZ2. Interacts with CHD7 and CHD8. Interacts with DYNLL1/LC8. It depends on Mg(2+) as a cofactor. Post-translationally, phosphorylated at Ser-750, probably by CHEK1. In terms of processing, autophosphorylated; phosphorylation promotes the assembly of higher order oligomers and enzymatic activity. As to expression, detected in placenta, fetal liver, kidney, pancreas, heart and skeletal muscle. Highly expressed in testis. Detected in spleen, thymus, colon, ovary, small intestine, prostate and peripheral blood leukocytes. Almost undetectable in liver and lung.

The protein resides in the nucleus. The protein localises to the nucleoplasm. Its subcellular location is the cytoplasm. It is found in the perinuclear region. It localises to the cytoskeleton. It carries out the reaction L-seryl-[protein] + ATP = O-phospho-L-seryl-[protein] + ADP + H(+). The enzyme catalyses L-threonyl-[protein] + ATP = O-phospho-L-threonyl-[protein] + ADP + H(+). Cell cycle-regulated, with maximal activity in the S-phase. Rapidly and transiently inhibited by phosphorylation following the generation of DNA double-stranded breaks during S-phase, probably by CHEK1, possibly at Ser-750. This inhibition is cell cycle checkpoint- and ATM-dependent. Serine/threonine-protein kinase involved in the process of chromatin assembly and probably also DNA replication, transcription, repair, and chromosome segregation. Phosphorylates the chromatin assembly factors ASF1A and ASF1B. Phosphorylation of ASF1A prevents its proteasome-mediated degradation, thereby enhancing chromatin assembly. Negative regulator of amino acid starvation-induced autophagy. The polypeptide is Serine/threonine-protein kinase tousled-like 2 (Homo sapiens (Human)).